The chain runs to 456 residues: Bifunctional protein GlmU (456 aa).

The segment at 1-229 (MLNSAMSVVI…ISETDGVNNR (229 aa)) is pyrophosphorylase. UDP-N-acetyl-alpha-D-glucosamine-binding positions include 11 to 14 (LAAG), lysine 25, glutamine 76, 81 to 82 (GT), 103 to 105 (YGD), glycine 140, glutamate 154, asparagine 169, and asparagine 227. Aspartate 105 contributes to the Mg(2+) binding site. Mg(2+) is bound at residue asparagine 227. A linker region spans residues 230 to 250 (LQLSRLERIYQAEQAEKLLLS). Residues 251-456 (GVMLRDPARF…QGWQRPVKKK (206 aa)) are N-acetyltransferase. UDP-N-acetyl-alpha-D-glucosamine-binding residues include arginine 333 and lysine 351. Catalysis depends on histidine 363, which acts as the Proton acceptor. 2 residues coordinate UDP-N-acetyl-alpha-D-glucosamine: tyrosine 366 and asparagine 377. Residues alanine 380, 386 to 387 (NY), serine 405, alanine 423, and arginine 440 each bind acetyl-CoA.

This sequence in the N-terminal section; belongs to the N-acetylglucosamine-1-phosphate uridyltransferase family. In the C-terminal section; belongs to the transferase hexapeptide repeat family. In terms of assembly, homotrimer. The cofactor is Mg(2+).

It localises to the cytoplasm. The enzyme catalyses alpha-D-glucosamine 1-phosphate + acetyl-CoA = N-acetyl-alpha-D-glucosamine 1-phosphate + CoA + H(+). It catalyses the reaction N-acetyl-alpha-D-glucosamine 1-phosphate + UTP + H(+) = UDP-N-acetyl-alpha-D-glucosamine + diphosphate. It functions in the pathway nucleotide-sugar biosynthesis; UDP-N-acetyl-alpha-D-glucosamine biosynthesis; N-acetyl-alpha-D-glucosamine 1-phosphate from alpha-D-glucosamine 6-phosphate (route II): step 2/2. It participates in nucleotide-sugar biosynthesis; UDP-N-acetyl-alpha-D-glucosamine biosynthesis; UDP-N-acetyl-alpha-D-glucosamine from N-acetyl-alpha-D-glucosamine 1-phosphate: step 1/1. Its pathway is bacterial outer membrane biogenesis; LPS lipid A biosynthesis. Functionally, catalyzes the last two sequential reactions in the de novo biosynthetic pathway for UDP-N-acetylglucosamine (UDP-GlcNAc). The C-terminal domain catalyzes the transfer of acetyl group from acetyl coenzyme A to glucosamine-1-phosphate (GlcN-1-P) to produce N-acetylglucosamine-1-phosphate (GlcNAc-1-P), which is converted into UDP-GlcNAc by the transfer of uridine 5-monophosphate (from uridine 5-triphosphate), a reaction catalyzed by the N-terminal domain. In Salmonella agona (strain SL483), this protein is Bifunctional protein GlmU.